The following is a 101-amino-acid chain: ATP-dependent Clp protease adapter protein ClpS 1 (101 aa).

It belongs to the ClpS family. Binds to the N-terminal domain of the chaperone ClpA.

Its function is as follows. Involved in the modulation of the specificity of the ClpAP-mediated ATP-dependent protein degradation. This chain is ATP-dependent Clp protease adapter protein ClpS 1, found in Bradyrhizobium diazoefficiens (strain JCM 10833 / BCRC 13528 / IAM 13628 / NBRC 14792 / USDA 110).